A 187-amino-acid polypeptide reads, in one-letter code: MVKYSREPSNLTRSAKAYGAYLRVHFKNTYETATAIKGMLVKDAKRYLNDVIDRKRCVPFRKFRGGVGRCAQAKAFKHTQGRWPEKSCKFLLDLLKNLESNAEVKGLEQSKLRLEHVQVNRAPVGRRRSYRAHGRIIPFLSHPCHVELIAVEDEDHVPRHTPTEKKVVKMNKRELARMRLRTGRALS.

The protein belongs to the universal ribosomal protein uL22 family.

This Theileria annulata protein is Large ribosomal subunit protein uL22 (RPL17).